Here is a 305-residue protein sequence, read N- to C-terminus: MTAHLSYVEAVVVGAFQGVTELFPVSSLGHAVLVPALVGGRWAQDLSVSAHRSPYLAFIVGLHVATAAALLVFFWRDWVRILAGFFSSLRHRRIRTPDERLAWLIVVGTIPVGLAGLALEQLFRTTLGKPVPAAAFLLLNGVALYAGEVLRRRVAPVADEPAVPDAEQQHGDEASDNRLAQLPLRRGVLIGAAQILALLPGISRSGITIVAGLWRGLSHEDAARFSFLLATPIILAAGVYKIPELFGPLGAGIGGQVLAGSIASFVCAYLAVRYLTRYFQTRTLTPFAIYCAVAGGASLVWLALR.

8 consecutive transmembrane segments (helical) span residues 18–38, 55–75, 103–123, 130–150, 187–207, 225–245, 246–266, and 284–304; these read GVTE…PALV, YLAF…VFFW, WLIV…EQLF, PVPA…GEVL, GVLI…RSGI, FSFL…IPEL, FGPL…ASFV, and LTPF…WLAL.

It belongs to the UppP family.

Its subcellular location is the cell membrane. It catalyses the reaction di-trans,octa-cis-undecaprenyl diphosphate + H2O = di-trans,octa-cis-undecaprenyl phosphate + phosphate + H(+). Functionally, catalyzes the dephosphorylation of undecaprenyl diphosphate (UPP). Confers resistance to bacitracin. This Mycolicibacterium paratuberculosis (strain ATCC BAA-968 / K-10) (Mycobacterium paratuberculosis) protein is Undecaprenyl-diphosphatase.